A 283-amino-acid polypeptide reads, in one-letter code: Probable protein phosphatase 2C 58 (283 aa).

The region spanning Thr-35–Phe-282 is the PPM-type phosphatase domain. Asp-72, Gly-73, Asp-234, and Asp-273 together coordinate Mn(2+).

The protein belongs to the PP2C family. Requires Mg(2+) as cofactor. It depends on Mn(2+) as a cofactor.

It carries out the reaction O-phospho-L-seryl-[protein] + H2O = L-seryl-[protein] + phosphate. The catalysed reaction is O-phospho-L-threonyl-[protein] + H2O = L-threonyl-[protein] + phosphate. The chain is Probable protein phosphatase 2C 58 from Arabidopsis thaliana (Mouse-ear cress).